Consider the following 444-residue polypeptide: Glutamyl-tRNA reductase (444 aa).

Residues 49–52 (TCNR), serine 109, 114–116 (ETQ), and glutamine 120 contribute to the substrate site. Cysteine 50 (nucleophile) is an active-site residue. Position 189-194 (189-194 (GAGKMG)) interacts with NADP(+).

The protein belongs to the glutamyl-tRNA reductase family. Homodimer.

It catalyses the reaction (S)-4-amino-5-oxopentanoate + tRNA(Glu) + NADP(+) = L-glutamyl-tRNA(Glu) + NADPH + H(+). Its pathway is porphyrin-containing compound metabolism; protoporphyrin-IX biosynthesis; 5-aminolevulinate from L-glutamyl-tRNA(Glu): step 1/2. In terms of biological role, catalyzes the NADPH-dependent reduction of glutamyl-tRNA(Glu) to glutamate 1-semialdehyde (GSA). This chain is Glutamyl-tRNA reductase, found in Bacillus cereus (strain ZK / E33L).